The chain runs to 123 residues: Late histone H2B.L1 (123 aa).

Positions 1–10 are enriched in low complexity; that stretch reads MPAKAQPAGK. A disordered region spans residues 1 to 33; the sequence is MPAKAQPAGKKGSKKAKAPRPSGGKKRRRRRKE. Residues 11 to 32 are compositionally biased toward basic residues; that stretch reads KGSKKAKAPRPSGGKKRRRRRK. The O-linked (GlcNAc) serine glycan is linked to serine 110. Residue lysine 118 forms a Glycyl lysine isopeptide (Lys-Gly) (interchain with G-Cter in ubiquitin) linkage.

This sequence belongs to the histone H2B family. In terms of assembly, the nucleosome is a histone octamer containing two molecules each of H2A, H2B, H3 and H4 assembled in one H3-H4 heterotetramer and two H2A-H2B heterodimers. The octamer wraps approximately 147 bp of DNA. Monoubiquitination of Lys-118 gives a specific tag for epigenetic transcriptional activation and is also prerequisite for histone H3 'Lys-4' and 'Lys-79' methylation. Post-translationally, glcNAcylation at Ser-110 promotes monoubiquitination of Lys-118. It fluctuates in response to extracellular glucose, and associates with transcribed genes.

It is found in the nucleus. Its subcellular location is the chromosome. In terms of biological role, core component of nucleosome. Nucleosomes wrap and compact DNA into chromatin, limiting DNA accessibility to the cellular machineries which require DNA as a template. Histones thereby play a central role in transcription regulation, DNA repair, DNA replication and chromosomal stability. DNA accessibility is regulated via a complex set of post-translational modifications of histones, also called histone code, and nucleosome remodeling. In Strongylocentrotus purpuratus (Purple sea urchin), this protein is Late histone H2B.L1.